A 228-amino-acid polypeptide reads, in one-letter code: Somatolactin (228 aa).

Residues 1 to 24 form the signal peptide; that stretch reads MFSIRMNKVLQGFVCLMLTHRIVG. 3 disulfides stabilise this stretch: cysteine 29/cysteine 38, cysteine 88/cysteine 200, and cysteine 217/cysteine 225. 2 N-linked (GlcNAc...) asparagine glycosylation sites follow: asparagine 141 and asparagine 177.

It belongs to the somatotropin/prolactin family.

Its subcellular location is the secreted. In Anguilla anguilla (European freshwater eel), this protein is Somatolactin.